The following is a 108-amino-acid chain: Pumilarin (108 aa).

The propeptide occupies methionine 1 to aspartate 38. The segment at residues leucine 39–tryptophan 108 is a cross-link (cyclopeptide (Leu-Trp)).

Post-translationally, the cross-link permits a high resistance to proteolysis. Is more resistant to specific proteases than to unspecific proteases.

Its subcellular location is the secreted. Functionally, cyclopeptide antibiotic that inhibits both Gram-positive and Gram-negative bacteria. Shows potent to weak activities against M.flavus (MIC=3 ug/ml), B.cereus (MIC=12 ug/ml), B.pumilus (MIC=12 ug/ml), E.coli (MIC=12 ug/ml), and S.pneumoniae (MIC=47 ug/ml). May act by forming pores. This chain is Pumilarin, found in Bacillus safensis.